Here is a 314-residue protein sequence, read N- to C-terminus: MVKLLVAKILCMVGMFFFMLLGSLLPVKIIEMDFEKAHRSKKILSLCNTFGGGVFLATCFNALLPAVREKLKEVLTLAHISTDYPLAETIMLLGFFMTVFLEQLVLTFRKERPAFIDLETFNASSDAGSDSEYESPFMGGPRGHALYAEPHGHSHGLSVQELSRSSPLRLLSLVFALSAHSVFEGLALGLQEEGEKVVSLFVGVAIHETLVAVALGINMARSAMALRDAAKLAVTVSAMIPLGISLGLGIDSAQGMPSSVASVLLQGLAGGTFLFVTFFEILAKELEEKSDRLLKVLFLVLGYTVLAGMVFIKW.

At 1–3 (MVK) the chain is on the extracellular side. Residues 4–24 (LLVAKILCMVGMFFFMLLGSL) form a helical membrane-spanning segment. The Cytoplasmic segment spans residues 25–42 (LPVKIIEMDFEKAHRSKK). Residues 43–63 (ILSLCNTFGGGVFLATCFNAL) traverse the membrane as a helical segment. Topologically, residues 64 to 85 (LPAVREKLKEVLTLAHISTDYP) are extracellular. Residues 86-106 (LAETIMLLGFFMTVFLEQLVL) form a helical membrane-spanning segment. Residues 107–169 (TFRKERPAFI…QELSRSSPLR (63 aa)) lie on the Cytoplasmic side of the membrane. Phosphoserine is present on residues Ser-125 and Ser-129. A helical membrane pass occupies residues 170 to 190 (LLSLVFALSAHSVFEGLALGL). Residues 191 to 196 (QEEGEK) lie on the Extracellular side of the membrane. The chain crosses the membrane as a helical span at residues 197–217 (VVSLFVGVAIHETLVAVALGI). Residues 218-229 (NMARSAMALRDA) are Cytoplasmic-facing. A helical membrane pass occupies residues 230–250 (AKLAVTVSAMIPLGISLGLGI). Residues 251-262 (DSAQGMPSSVAS) lie on the Extracellular side of the membrane. Residues 263 to 283 (VLLQGLAGGTFLFVTFFEILA) form a helical membrane-spanning segment. The Cytoplasmic segment spans residues 284–292 (KELEEKSDR). Residues 293-313 (LLKVLFLVLGYTVLAGMVFIK) form a helical membrane-spanning segment. A topological domain (extracellular) is located at residue Trp-314.

This sequence belongs to the ZIP transporter (TC 2.A.5) family.

The protein localises to the cell membrane. Its subcellular location is the apical cell membrane. It carries out the reaction Zn(2+)(in) = Zn(2+)(out). Its function is as follows. Transporter for the divalent cation Zn(2+). Mediates the influx of Zn(2+) into cells from extracellular space. Controls Zn(2+) accumulation into dentate gyrus granule cells in the hippocampus. Mediates Zn(2+) reuptake from the secreted milk within the alveolar lumen. This chain is Zinc transporter ZIP3 (SLC39A3), found in Bos taurus (Bovine).